The chain runs to 342 residues: Dihydroorotate dehydrogenase (quinone) (342 aa).

FMN contacts are provided by residues 65 to 69 and threonine 89; that span reads AGLDK. Lysine 69 is a binding site for substrate. Residue 114–118 participates in substrate binding; sequence NRMGF. The FMN site is built by asparagine 142 and asparagine 175. Asparagine 175 is a substrate binding site. Serine 178 serves as the catalytic Nucleophile. Asparagine 180 lines the substrate pocket. Lysine 220 and threonine 248 together coordinate FMN. Substrate is bound at residue 249–250; the sequence is NT. FMN is bound by residues glycine 271, glycine 300, and 321 to 322; that span reads YT.

Belongs to the dihydroorotate dehydrogenase family. Type 2 subfamily. Monomer. It depends on FMN as a cofactor.

The protein localises to the cell membrane. It carries out the reaction (S)-dihydroorotate + a quinone = orotate + a quinol. It functions in the pathway pyrimidine metabolism; UMP biosynthesis via de novo pathway; orotate from (S)-dihydroorotate (quinone route): step 1/1. Functionally, catalyzes the conversion of dihydroorotate to orotate with quinone as electron acceptor. The protein is Dihydroorotate dehydrogenase (quinone) of Burkholderia pseudomallei (strain 668).